Consider the following 597-residue polypeptide: MEIVYVYTKKRSEFGRQCNFSDRPAELHVDILPDESLLSNFIEKNPVDRGIQCVQEMSEHEINTERFETDSRGINHMEGGWPKDINPQEVEQVLRFRKKVEKDESYVTTIQNLASSMEHTIKQNNAIDIYEDYFADLEIEEVEETPSAKTINVFRDPNEIKRPATHLSWYPDGPKKLAVAYSSLEFQKTSAETSMDSYIWDIENPNKPEFVLKPVSPLVCLEYNPKDVHVLIGGCYNGQVAFWDTRKGSQAVEMSPVEHSHHDPVYKTIWLQSKTGTECFSASTDGQVLWWDMRKLGEPTEKLIMDPSKKGKMENAQGVISLEYEPTIPTKFMVGTEQGTIISCNRKAKTPPEKIVAIYKEHIGPVYSLQRNPFFPKNFLTVGDWTARIWSEDIRDSSIMWTKYHMSYLTDGCWSPVRPAVFFTTKMDGSLDVWDYLFKQKDPTLSLQVSDDALHSLRVQDQGRLIATGSNSGTTTLLELSSGLCTMQRNEKALVTAMFERETKREKILESRQRELRLKRQGASAQGQDDDEEGGPDEEEDLVAAAEKEFFQIVQADKKKFAAQQAKLSEQDNKIIEEAEENNGSEKKDTENGEKEG.

7 WD repeats span residues 159–210, 213–253, 260–301, 314–354, 361–400, 404–444, and 449–488; these read EIKR…KPEF, KPVS…QAVE, SHHD…EPTE, ENAQ…PPEK, EHIG…SSIM, YHMS…KDPT, and VSDD…CTMQ. 2 disordered regions span residues 512–546 and 562–597; these read RQRE…VAAA and AAQQ…EKEG. The segment covering 528-542 has biased composition (acidic residues); the sequence is QDDDEEGGPDEEEDL. Positions 584–597 are enriched in basic and acidic residues; sequence GSEKKDTENGEKEG.

The protein belongs to the dynein intermediate chain family. In terms of assembly, consists of at least two heavy chains (alpha and beta), three intermediate chains and several light chains.

It is found in the cytoplasm. The protein localises to the cytoskeleton. Its subcellular location is the cilium axoneme. Its function is as follows. May play a role in the regulation of dynein heavy chain activity. This Heliocidaris crassispina (Sea urchin) protein is Dynein intermediate chain 3, ciliary.